The sequence spans 350 residues: MPSTVASIRDYSNIPKSKREEIANGPGLEDFIVKSPTSLNTLFIYYSNFSLPLPPWLKTTIPTSNSYNKLNKDLRNLKLHTVCEEARCPNIGECWGGESGTATATIMVLGDTCTRGCRFCSVKTARKPPPPDPDEPVNTAIALAQWGLDYVVLTSVDRDDLSDGGSNHFAETVKEIKKRNLSMLVETLTPDFRGDKAAIATVVNAGVDVYAHNVETVKNLQWLVRDPRANYEQSLEVLSYAKIVNPNLVTKTSIMLGLGETDESILQTMKDLRSIDVDCITLGQYMQPTRYHIKVKEYVTPAKFQHWEKVGNELGFAYTASGPLVRSSYKAGEFYLKNLVHKRNKTNGSD.

[4Fe-4S] cluster contacts are provided by cysteine 83, cysteine 88, cysteine 94, cysteine 113, cysteine 117, cysteine 120, and serine 328. A Radical SAM core domain is found at 96 to 317; it reads GGESGTATAT…EKVGNELGFA (222 aa).

The protein belongs to the radical SAM superfamily. Lipoyl synthase family. It depends on [4Fe-4S] cluster as a cofactor.

It localises to the mitochondrion. It catalyses the reaction [[Fe-S] cluster scaffold protein carrying a second [4Fe-4S](2+) cluster] + N(6)-octanoyl-L-lysyl-[protein] + 2 oxidized [2Fe-2S]-[ferredoxin] + 2 S-adenosyl-L-methionine + 4 H(+) = [[Fe-S] cluster scaffold protein] + N(6)-[(R)-dihydrolipoyl]-L-lysyl-[protein] + 4 Fe(3+) + 2 hydrogen sulfide + 2 5'-deoxyadenosine + 2 L-methionine + 2 reduced [2Fe-2S]-[ferredoxin]. The protein operates within protein modification; protein lipoylation via endogenous pathway; protein N(6)-(lipoyl)lysine from octanoyl-[acyl-carrier-protein]: step 2/2. Catalyzes the radical-mediated insertion of two sulfur atoms into the C-6 and C-8 positions of the octanoyl moiety bound to the lipoyl domains of lipoate-dependent enzymes, thereby converting the octanoylated domains into lipoylated derivatives. This Trichoplax adhaerens (Trichoplax reptans) protein is Lipoyl synthase, mitochondrial.